We begin with the raw amino-acid sequence, 648 residues long: Transmembrane 9 superfamily member 8 (648 aa).

The N-terminal stretch at 1–33 is a signal peptide; it reads MAMEFLRSSRRILESSGCAIALIFLLFIHGAHS. At 34 to 285 the chain is on the lumenal side; that stretch reads FYLPGVAPQD…YLLMSDNQIH (252 aa). A helical transmembrane segment spans residues 286–306; it reads WFSIVNSLMIVLFLSGMVAMI. Over 307–355 the chain is Cytoplasmic; it reads MLRTLYRDISRYNELETQEEAQEETGWKLVHGDVFRLPTNSDLLCVYVG. Residues 356 to 376 traverse the membrane as a helical segment; sequence TGVQCLGMVFVTMIFAMLGFL. Residues 377-381 lie on the Lumenal side of the membrane; the sequence is SPSNR. A helical membrane pass occupies residues 382–402; the sequence is GGLMTAMLLLWVFMGLFAGYA. At 403–422 the chain is on the cytoplasmic side; that stretch reads SSRLYKMFKGTEWKRIAFRT. A helical membrane pass occupies residues 423-443; the sequence is AFLFPAVVSAIFFVLNALIWG. The Lumenal segment spans residues 444–455; it reads QKSSGAVPFGTM. Residues 456 to 476 form a helical membrane-spanning segment; the sequence is FALIFLWFGISVPLVFVGGYI. Residues 477-506 lie on the Cytoplasmic side of the membrane; that stretch reads GFKKPAADDPVKTNKIPRQIPEQAWYMNPV. Residues 507 to 527 form a helical membrane-spanning segment; the sequence is FSILIGGILPFGAVFIELFFI. The Lumenal segment spans residues 528 to 538; that stretch reads LTSIWLNQFYY. Residues 539–559 form a helical membrane-spanning segment; it reads IFGFLFLVFVILIVTCAEITV. The Cytoplasmic segment spans residues 560-577; the sequence is VLCYFQLCSEDYLWWWRS. A helical membrane pass occupies residues 578–598; sequence YLTSGSSALYLFLYATFYFFT. Topologically, residues 599–604 are lumenal; that stretch reads KLQITK. The chain crosses the membrane as a helical span at residues 605-625; the sequence is LVSAMLYFGYMLIASYAFFVL. Residues 626–648 lie on the Cytoplasmic side of the membrane; the sequence is TGTIGFYACLWFTRLIYSSVKID. Residues 637 to 642 carry the Endoplasmic reticulum export signal motif; it reads FTRLIY. The short motif at 646-648 is the Golgi retention signal element; that stretch reads KID.

Belongs to the nonaspanin (TM9SF) (TC 9.A.2) family.

The protein localises to the endosome membrane. Its subcellular location is the golgi apparatus membrane. This Arabidopsis thaliana (Mouse-ear cress) protein is Transmembrane 9 superfamily member 8.